Here is a 284-residue protein sequence, read N- to C-terminus: 2-dehydro-3-deoxyphosphooctonate aldolase (284 aa).

This sequence belongs to the KdsA family.

Its subcellular location is the cytoplasm. It carries out the reaction D-arabinose 5-phosphate + phosphoenolpyruvate + H2O = 3-deoxy-alpha-D-manno-2-octulosonate-8-phosphate + phosphate. The protein operates within carbohydrate biosynthesis; 3-deoxy-D-manno-octulosonate biosynthesis; 3-deoxy-D-manno-octulosonate from D-ribulose 5-phosphate: step 2/3. It functions in the pathway bacterial outer membrane biogenesis; lipopolysaccharide biosynthesis. This Burkholderia orbicola (strain MC0-3) protein is 2-dehydro-3-deoxyphosphooctonate aldolase.